The sequence spans 386 residues: Putative prophage major tail sheath protein (386 aa).

The protein belongs to the myoviridae tail sheath protein family.

The protein localises to the secreted. The protein is Putative prophage major tail sheath protein of Pseudomonas aeruginosa (strain UCBPP-PA14).